Consider the following 511-residue polypeptide: UDP-N-acetylhexosamine pyrophosphorylase-like protein 1 (511 aa).

Residues 1-19 (MDRSESAESAESRRRRAEE) show a composition bias toward basic and acidic residues. A disordered region spans residues 1-22 (MDRSESAESAESRRRRAEESGQ). A Substrate binding motif is present at residues 117-120 (LAGG). UTP is bound by residues 117–120 (LAGG), lysine 131, glutamine 205, and glycine 231. Asparagine 232 is a binding site for substrate. Aspartate 262 contacts UTP. The Substrate binding signature appears at 312-313 (EY). Lysine 386 is a binding site for UTP. Lysine 416 contacts substrate.

Belongs to the UDPGP type 1 family.

The protein is UDP-N-acetylhexosamine pyrophosphorylase-like protein 1 (uap1l1) of Xenopus tropicalis (Western clawed frog).